Consider the following 157-residue polypeptide: Glutamyl-tRNA(Gln) amidotransferase subunit C, mitochondrial (157 aa).

Belongs to the GatC family. As to quaternary structure, subunit of the heterotrimeric GatCAB amidotransferase (AdT) complex, composed of A, B and C subunits.

Its subcellular location is the mitochondrion. The enzyme catalyses L-glutamyl-tRNA(Gln) + L-glutamine + ATP + H2O = L-glutaminyl-tRNA(Gln) + L-glutamate + ADP + phosphate + H(+). Its function is as follows. Allows the formation of correctly charged Gln-tRNA(Gln) through the transamidation of misacylated Glu-tRNA(Gln) in the mitochondria. The reaction takes place in the presence of glutamine and ATP through an activated gamma-phospho-Glu-tRNA(Gln). In Drosophila virilis (Fruit fly), this protein is Glutamyl-tRNA(Gln) amidotransferase subunit C, mitochondrial.